Here is a 181-residue protein sequence, read N- to C-terminus: ATP-dependent protease subunit HslV (181 aa).

Thr7 is a catalytic residue. The Na(+) site is built by Gly166, Cys169, and Thr172.

Belongs to the peptidase T1B family. HslV subfamily. In terms of assembly, a double ring-shaped homohexamer of HslV is capped on each side by a ring-shaped HslU homohexamer. The assembly of the HslU/HslV complex is dependent on binding of ATP.

It is found in the cytoplasm. The catalysed reaction is ATP-dependent cleavage of peptide bonds with broad specificity.. Allosterically activated by HslU binding. Functionally, protease subunit of a proteasome-like degradation complex believed to be a general protein degrading machinery. The chain is ATP-dependent protease subunit HslV from Variovorax paradoxus (strain S110).